We begin with the raw amino-acid sequence, 409 residues long: Imidazolonepropionase (409 aa).

2 residues coordinate Fe(3+): H70 and H72. Residues H70 and H72 each coordinate Zn(2+). 4-imidazolone-5-propanoate contacts are provided by R79, Y137, and H164. Residue Y137 coordinates N-formimidoyl-L-glutamate. H225 serves as a coordination point for Fe(3+). Residue H225 participates in Zn(2+) binding. Q228 lines the 4-imidazolone-5-propanoate pocket. Residues N314 and G316 each coordinate N-formimidoyl-L-glutamate. T317 serves as a coordination point for 4-imidazolone-5-propanoate.

The protein belongs to the metallo-dependent hydrolases superfamily. HutI family. Zn(2+) is required as a cofactor. It depends on Fe(3+) as a cofactor.

It localises to the cytoplasm. It catalyses the reaction 4-imidazolone-5-propanoate + H2O = N-formimidoyl-L-glutamate. The protein operates within amino-acid degradation; L-histidine degradation into L-glutamate; N-formimidoyl-L-glutamate from L-histidine: step 3/3. Functionally, catalyzes the hydrolytic cleavage of the carbon-nitrogen bond in imidazolone-5-propanoate to yield N-formimidoyl-L-glutamate. It is the third step in the universal histidine degradation pathway. In Paenarthrobacter aurescens (strain TC1), this protein is Imidazolonepropionase.